Consider the following 656-residue polypeptide: UvrABC system protein B (656 aa).

Positions 24–409 constitute a Helicase ATP-binding domain; it reads QGVRNRTPSQ…QGHIVEQILR (386 aa). Position 37–44 (37–44) interacts with ATP; that stretch reads GTTGSGKT. Residues 90 to 113 carry the Beta-hairpin motif; the sequence is YYDYYQPEAYIARNDTYIEKSLLI. The 164-residue stretch at 426 to 589 folds into the Helicase C-terminal domain; sequence QVDDLLEEIR…ITPKPIIKAI (164 aa). In terms of domain architecture, UVR spans 616–651; the sequence is EKLIKKYENLMLQAANAFRFDEAAQYRDKMKAAKEQ.

The protein belongs to the UvrB family. In terms of assembly, forms a heterotetramer with UvrA during the search for lesions. Interacts with UvrC in an incision complex.

It localises to the cytoplasm. Functionally, the UvrABC repair system catalyzes the recognition and processing of DNA lesions. A damage recognition complex composed of 2 UvrA and 2 UvrB subunits scans DNA for abnormalities. Upon binding of the UvrA(2)B(2) complex to a putative damaged site, the DNA wraps around one UvrB monomer. DNA wrap is dependent on ATP binding by UvrB and probably causes local melting of the DNA helix, facilitating insertion of UvrB beta-hairpin between the DNA strands. Then UvrB probes one DNA strand for the presence of a lesion. If a lesion is found the UvrA subunits dissociate and the UvrB-DNA preincision complex is formed. This complex is subsequently bound by UvrC and the second UvrB is released. If no lesion is found, the DNA wraps around the other UvrB subunit that will check the other stand for damage. In Chlamydia abortus (strain DSM 27085 / S26/3) (Chlamydophila abortus), this protein is UvrABC system protein B.